Here is a 139-residue protein sequence, read N- to C-terminus: MTERTLVLIKPDGVKRQLVGEILSRIERKGLTLAALELKNVSDDLARQHYAEHADKPFFGSLLEFITSGPLVAAIVEGPRAVAAFRQIAGGTDPVEKAVPGTIRGDFALITQDNLVHGSDSPESAAREIALWFPGEATA.

ATP-binding residues include K10, F58, R86, T92, R104, and N114. The active-site Pros-phosphohistidine intermediate is the H117.

It belongs to the NDK family. Homotetramer. Mg(2+) serves as cofactor.

The protein resides in the cytoplasm. The enzyme catalyses a 2'-deoxyribonucleoside 5'-diphosphate + ATP = a 2'-deoxyribonucleoside 5'-triphosphate + ADP. It catalyses the reaction a ribonucleoside 5'-diphosphate + ATP = a ribonucleoside 5'-triphosphate + ADP. In terms of biological role, major role in the synthesis of nucleoside triphosphates other than ATP. The ATP gamma phosphate is transferred to the NDP beta phosphate via a ping-pong mechanism, using a phosphorylated active-site intermediate. The chain is Nucleoside diphosphate kinase from Mycolicibacterium smegmatis (strain ATCC 700084 / mc(2)155) (Mycobacterium smegmatis).